Consider the following 508-residue polypeptide: MDEGSEVSTDGNSLIKAVHQSRLRLTRLLLEGGAYINESNDRGETPLMIACKTKHVDQQSVGRAKMVKYLLENSADPNIQDKSGKSALMHACLERAGPEVVSLLLKSGADLSLQDHSGYSALVYAINAEDRDTLKVLLSACQAKGKEVIIITTAKSPSGRHTTQHHLNMPPADMDGSHPPATPSEIDIKTASLPLSYSSETDLTLFGFKDKELCGGSDNTWDPDSPPRKPVIATNGPKLSQAPAWIKSTPSLKHQARVASLQEELQDITPEEEIAYKTNALALSKRFITRHQSIDVKDTAHLLRAFDQVNSRKMSYDEINYHSLFPEGSQTSVEIPTDRDPDSNQIFASTLKSIVQKRNSGANHYSSDSQLAEGVTPPTVEDGKAAKKKIFAPSPSLLSGSKELVEPAPPGPLSRRNHAVLERRGSGAFPLDHSLAQSRPGFLPPLNVNPHPPITDIGVNNKICGLLSCGQKALMPTAPIFPKEFKTKKMLLRRQSLQTEQIKQLVNF.

ANK repeat units lie at residues 9–38, 42–79, 83–113, and 117–146; these read TDGN…YINE, RGET…DPNI, SGKS…DLSL, and SGYS…AKGK. Residues 157–185 form a disordered region; the sequence is PSGRHTTQHHLNMPPADMDGSHPPATPSE. Ser-260 carries the phosphoserine modification. The residue at position 269 (Thr-269) is a Phosphothreonine. Ser-293 is subject to Phosphoserine. Residues 361 to 370 show a composition bias toward polar residues; it reads GANHYSSDSQ. The interval 361 to 380 is disordered; sequence GANHYSSDSQLAEGVTPPTV.

This sequence belongs to the ANKRD34 family. Phosphorylated. As to expression, specifically and constitutively expressed in brain (at protein level).

The protein localises to the cytoplasm. It is found in the nucleus. The chain is Ankyrin repeat domain-containing protein 34B (Ankrd34b) from Mus musculus (Mouse).